The sequence spans 692 residues: Elongation factor G (692 aa).

In terms of domain architecture, tr-type G spans 8–283 (EDYRNFGIMA…AVVDYLPSPL (276 aa)). GTP-binding positions include 17–24 (AHIDAGKT), 81–85 (DTPGH), and 135–138 (NKMD).

It belongs to the TRAFAC class translation factor GTPase superfamily. Classic translation factor GTPase family. EF-G/EF-2 subfamily.

The protein localises to the cytoplasm. In terms of biological role, catalyzes the GTP-dependent ribosomal translocation step during translation elongation. During this step, the ribosome changes from the pre-translocational (PRE) to the post-translocational (POST) state as the newly formed A-site-bound peptidyl-tRNA and P-site-bound deacylated tRNA move to the P and E sites, respectively. Catalyzes the coordinated movement of the two tRNA molecules, the mRNA and conformational changes in the ribosome. The sequence is that of Elongation factor G from Caulobacter sp. (strain K31).